The sequence spans 889 residues: Alanine--tRNA ligase (889 aa).

Residues His-569, His-573, Cys-671, and His-675 each coordinate Zn(2+).

Belongs to the class-II aminoacyl-tRNA synthetase family. The cofactor is Zn(2+).

The protein localises to the cytoplasm. It catalyses the reaction tRNA(Ala) + L-alanine + ATP = L-alanyl-tRNA(Ala) + AMP + diphosphate. Functionally, catalyzes the attachment of alanine to tRNA(Ala) in a two-step reaction: alanine is first activated by ATP to form Ala-AMP and then transferred to the acceptor end of tRNA(Ala). Also edits incorrectly charged Ser-tRNA(Ala) and Gly-tRNA(Ala) via its editing domain. The polypeptide is Alanine--tRNA ligase (Synechococcus sp. (strain CC9605)).